The following is a 651-amino-acid chain: MAVTRAAAPMVGNCSSAMLIIGRRYFSSPFTEKLRKTNRKKVIDLAAYPPKKIRNFGIVAHVDHGKSTLADRFLEMTGAVEKSSHASQMLDKLQVERERGITVKAQSCTMFHKDCMLNLIDTPGHADFSFEVARSLTATNGILLLVAANQGVQAQTVANFWLAFEAGLTIIPVINKVDLKSANVPRVVSQMENLFDFLPSEILYISAKNGTGIGDVLDAVVERLPPPKVEAHSPLRAHVFDSWYETHHGPVVCVAVHDGVISKGQRIRTYHSDCEYEVLVVGIMIPNMYEVKCLYAGQVGYLLTTMKSVQDAVIGETLYDVSDERNMVQPMPLITPTPPCIYASIYPTNINEYNALRVALYKLALNDSSVQIQHSNSTALGNGFKIGFSGHLHMEEYDANITITAPSVEYRAVIKDNQTILKKRYNGQRVIRLLDASDFPVCPSDIDHFLEPMIKLTLLLSTAYCEHVERLCVDARGEQVENNGLDTDCIMQQWRLPFAEVCMDFFDRLKRITSGYVTYNYQWDGFQKATIELLMIHINDLPIYEFSEIMPSNQIKARAKEIVKKLKEEIPRQQYEVRIKATLGQSKKALVQTVIAPVKKDFTGRLKGNFGGSGWERFCKKLSHQKKGKERMKQLGQVQIPKEAFINVLRR.

Residues Met-1–Phe-26 constitute a mitochondrion transit peptide. The tr-type G domain occupies Lys-51–Lys-228. Residues Ala-60–Ser-67, Asp-121–His-125, and Asn-175–Asp-178 contribute to the GTP site.

This sequence belongs to the TRAFAC class translation factor GTPase superfamily. Classic translation factor GTPase family. LepA subfamily.

The protein localises to the mitochondrion inner membrane. The catalysed reaction is GTP + H2O = GDP + phosphate + H(+). Promotes mitochondrial protein synthesis. May act as a fidelity factor of the translation reaction, by catalyzing a one-codon backward translocation of tRNAs on improperly translocated ribosomes. Binds to mitochondrial ribosomes in a GTP-dependent manner. This Brugia malayi (Filarial nematode worm) protein is Translation factor GUF1 homolog, mitochondrial.